The following is a 78-amino-acid chain: Mandibular organ-inhibiting hormone 2 (78 aa).

3 cysteine pairs are disulfide-bonded: Cys-7–Cys-44, Cys-24–Cys-40, and Cys-27–Cys-53.

Belongs to the arthropod CHH/MIH/GIH/VIH hormone family. As to expression, produced by the medulla terminalis X-organ in the eyestalks and transported to the sinus gland where it is stored and released.

The protein localises to the secreted. Functionally, represses the synthesis of methyl farnesoate, the precursor of insect juvenile hormone III in the mandibular organ. This Cancer pagurus (Rock crab) protein is Mandibular organ-inhibiting hormone 2.